The chain runs to 376 residues: Alanine racemase (376 aa).

Residue Lys40 is the Proton acceptor; specific for D-alanine of the active site. Lys40 is modified (N6-(pyridoxal phosphate)lysine). A substrate-binding site is contributed by Arg138. Residue Tyr270 is the Proton acceptor; specific for L-alanine of the active site. Met317 serves as a coordination point for substrate.

Belongs to the alanine racemase family. The cofactor is pyridoxal 5'-phosphate.

It carries out the reaction L-alanine = D-alanine. Its pathway is amino-acid biosynthesis; D-alanine biosynthesis; D-alanine from L-alanine: step 1/1. In terms of biological role, catalyzes the interconversion of L-alanine and D-alanine. May also act on other amino acids. In Lactobacillus gasseri (strain ATCC 33323 / DSM 20243 / BCRC 14619 / CIP 102991 / JCM 1131 / KCTC 3163 / NCIMB 11718 / NCTC 13722 / AM63), this protein is Alanine racemase (alr).